The chain runs to 372 residues: Queuine tRNA-ribosyltransferase (372 aa).

The active-site Proton acceptor is the Asp-89. Residues 89-93 (DSGGF), Asp-161, and Gly-232 contribute to the substrate site. The interval 262-268 (GIGDLPS) is RNA binding. Residue Asp-281 is the Nucleophile of the active site. The RNA binding; important for wobble base 34 recognition stretch occupies residues 286–290 (TKAAR). Residues Cys-319, Cys-321, Cys-324, and His-351 each coordinate Zn(2+).

This sequence belongs to the queuine tRNA-ribosyltransferase family. As to quaternary structure, homodimer. Within each dimer, one monomer is responsible for RNA recognition and catalysis, while the other monomer binds to the replacement base PreQ1. Zn(2+) is required as a cofactor.

It catalyses the reaction 7-aminomethyl-7-carbaguanine + guanosine(34) in tRNA = 7-aminomethyl-7-carbaguanosine(34) in tRNA + guanine. It functions in the pathway tRNA modification; tRNA-queuosine biosynthesis. Functionally, catalyzes the base-exchange of a guanine (G) residue with the queuine precursor 7-aminomethyl-7-deazaguanine (PreQ1) at position 34 (anticodon wobble position) in tRNAs with GU(N) anticodons (tRNA-Asp, -Asn, -His and -Tyr). Catalysis occurs through a double-displacement mechanism. The nucleophile active site attacks the C1' of nucleotide 34 to detach the guanine base from the RNA, forming a covalent enzyme-RNA intermediate. The proton acceptor active site deprotonates the incoming PreQ1, allowing a nucleophilic attack on the C1' of the ribose to form the product. After dissociation, two additional enzymatic reactions on the tRNA convert PreQ1 to queuine (Q), resulting in the hypermodified nucleoside queuosine (7-(((4,5-cis-dihydroxy-2-cyclopenten-1-yl)amino)methyl)-7-deazaguanosine). In Chlamydia pneumoniae (Chlamydophila pneumoniae), this protein is Queuine tRNA-ribosyltransferase.